We begin with the raw amino-acid sequence, 395 residues long: Phosphopentomutase (395 aa).

Mn(2+) is bound by residues D13, D288, H293, D329, H330, and H341.

It belongs to the phosphopentomutase family. Mn(2+) serves as cofactor.

The protein localises to the cytoplasm. It carries out the reaction 2-deoxy-alpha-D-ribose 1-phosphate = 2-deoxy-D-ribose 5-phosphate. The catalysed reaction is alpha-D-ribose 1-phosphate = D-ribose 5-phosphate. It participates in carbohydrate degradation; 2-deoxy-D-ribose 1-phosphate degradation; D-glyceraldehyde 3-phosphate and acetaldehyde from 2-deoxy-alpha-D-ribose 1-phosphate: step 1/2. Isomerase that catalyzes the conversion of deoxy-ribose 1-phosphate (dRib-1-P) and ribose 1-phosphate (Rib-1-P) to deoxy-ribose 5-phosphate (dRib-5-P) and ribose 5-phosphate (Rib-5-P), respectively. The protein is Phosphopentomutase of Agathobacter rectalis (strain ATCC 33656 / DSM 3377 / JCM 17463 / KCTC 5835 / VPI 0990) (Eubacterium rectale).